Consider the following 61-residue polypeptide: Large ribosomal subunit protein eL37 (61 aa).

Zn(2+) is bound by residues C18, C21, C33, and C36. Residues C18–C36 form a C4-type zinc finger.

This sequence belongs to the eukaryotic ribosomal protein eL37 family. The cofactor is Zn(2+).

Binds to the 23S rRNA. This is Large ribosomal subunit protein eL37 from Methanosphaera stadtmanae (strain ATCC 43021 / DSM 3091 / JCM 11832 / MCB-3).